The sequence spans 370 residues: Cytochrome b (370 aa).

4 helical membrane passes run 25–45 (FGSM…FLAV), 69–90 (WMMQ…YIHI), 105–125 (WFSG…GYVL), and 170–190 (FFAL…LHIL). The heme b site is built by H75 and H89. Heme b contacts are provided by H174 and H188. H193 provides a ligand contact to a ubiquinone. 4 helical membrane passes run 218-238 (YKDM…VSFF), 280-300 (LGGA…PFTH), 312-332 (FMQL…WTAT), and 339-358 (FTTI…ISNP).

The protein belongs to the cytochrome b family. In terms of assembly, the cytochrome bc1 complex contains 3 respiratory subunits (MT-CYB, CYC1 and UQCRFS1), 2 core proteins (UQCRC1 and UQCRC2) and probably 6 low-molecular weight proteins. The cofactor is heme b.

The protein resides in the mitochondrion inner membrane. Its function is as follows. Component of the ubiquinol-cytochrome c reductase complex (complex III or cytochrome b-c1 complex) that is part of the mitochondrial respiratory chain. The b-c1 complex mediates electron transfer from ubiquinol to cytochrome c. Contributes to the generation of a proton gradient across the mitochondrial membrane that is then used for ATP synthesis. The chain is Cytochrome b (MT-CYB) from Chilabothrus strigilatus mccraniei (Ragged Island boa constrictor).